The sequence spans 142 residues: Large ribosomal subunit protein uL11 (142 aa).

The protein belongs to the universal ribosomal protein uL11 family. Part of the ribosomal stalk of the 50S ribosomal subunit. Interacts with L10 and the large rRNA to form the base of the stalk. L10 forms an elongated spine to which L12 dimers bind in a sequential fashion forming a multimeric L10(L12)X complex. Post-translationally, one or more lysine residues are methylated.

Functionally, forms part of the ribosomal stalk which helps the ribosome interact with GTP-bound translation factors. In Baumannia cicadellinicola subsp. Homalodisca coagulata, this protein is Large ribosomal subunit protein uL11.